A 342-amino-acid polypeptide reads, in one-letter code: Non-homologous end-joining protein 1 (342 aa).

Helical transmembrane passes span 27–47 (LLLF…LVSL) and 129–149 (MFYM…NLST). The interaction with LIF1 stretch occupies residues 173–342 (LRDLDGGSKV…RKFGKVRIKN (170 aa)). The interval 270–342 (ADPTNEARPN…RKFGKVRIKN (73 aa)) is disordered. Residues 286–296 (PKTDFKPKSRE) show a composition bias toward basic and acidic residues. The span at 297–312 (SSTSSQLRLENFSESE) shows a compositional bias: polar residues. Basic residues predominate over residues 331–342 (KKRKFGKVRIKN).

This sequence belongs to the XRCC4-XLF family. XLF subfamily. Interacts (via C-terminus) with LIF1 (via N-terminus); the interaction is direct. Interacts with DNL4.

The protein localises to the cytoplasm. It is found in the nucleus membrane. Involved in non-homologous end joining (NHEJ). Facilitates the transport of LIF1 into the nucleus, where it can interact with DNA ligase DNL4 to repair double-strand breaks (DSB). Mediates mating-type regulation of NHEJ. Prevents chromosome circularisation by NHEJ in absence of telomerase. This chain is Non-homologous end-joining protein 1 (NEJ1), found in Saccharomyces cerevisiae (strain ATCC 204508 / S288c) (Baker's yeast).